Here is a 72-residue protein sequence, read N- to C-terminus: ATP synthase subunit c (72 aa).

2 consecutive transmembrane segments (helical) span residues 1–21 and 49–69; these read MSLG…GAGI and FIGV…AFIV.

The protein belongs to the ATPase C chain family. As to quaternary structure, F-type ATPases have 2 components, F(1) - the catalytic core - and F(0) - the membrane proton channel. F(1) has five subunits: alpha(3), beta(3), gamma(1), delta(1), epsilon(1). F(0) has three main subunits: a(1), b(2) and c(10-14). The alpha and beta chains form an alternating ring which encloses part of the gamma chain. F(1) is attached to F(0) by a central stalk formed by the gamma and epsilon chains, while a peripheral stalk is formed by the delta and b chains.

It is found in the cell membrane. In terms of biological role, f(1)F(0) ATP synthase produces ATP from ADP in the presence of a proton or sodium gradient. F-type ATPases consist of two structural domains, F(1) containing the extramembraneous catalytic core and F(0) containing the membrane proton channel, linked together by a central stalk and a peripheral stalk. During catalysis, ATP synthesis in the catalytic domain of F(1) is coupled via a rotary mechanism of the central stalk subunits to proton translocation. Its function is as follows. Key component of the F(0) channel; it plays a direct role in translocation across the membrane. A homomeric c-ring of between 10-14 subunits forms the central stalk rotor element with the F(1) delta and epsilon subunits. The protein is ATP synthase subunit c of Bacillus cytotoxicus (strain DSM 22905 / CIP 110041 / 391-98 / NVH 391-98).